A 447-amino-acid polypeptide reads, in one-letter code: Serine/threonine-protein phosphatase 2A 55 kDa regulatory subunit B gamma isoform (447 aa).

WD repeat units lie at residues 22-61 (TEADVISTVEFNHTGELLATGDKGGRVVIFQREPESKNAP), 87-128 (EIEE…KRPE), 171-209 (GHTYHINSISVNSDCETYMSADDLRINLWHLAITDRSFN), 220-260 (DLTE…LCDK), 279-317 (EIISSVSDVKFSHSGRYMLTRDYLTVKVWDLNMEARPIE), 334-375 (ESDC…DVTL), and 410-446 (DFTKKILHTAWHPAENIIAIAATNNLYIFQDKVNSDM).

The protein belongs to the phosphatase 2A regulatory subunit B family. As to quaternary structure, PP2A consists of a common heterodimeric core enzyme, composed of a 36 kDa catalytic subunit (subunit C) and a 65 kDa constant regulatory subunit (PR65 or subunit A), that associates with a variety of regulatory subunits. Proteins that associate with the core dimer include three families of regulatory subunits B (the R2/B/PR55/B55, R3/B''/PR72/PR130/PR59 and R5/B'/B56 families), the 48 kDa variable regulatory subunit, viral proteins, and cell signaling molecules. Interacts with IER5.

Functionally, the B regulatory subunit might modulate substrate selectivity and catalytic activity, and might also direct the localization of the catalytic enzyme to a particular subcellular compartment. The sequence is that of Serine/threonine-protein phosphatase 2A 55 kDa regulatory subunit B gamma isoform (Ppp2r2c) from Mus musculus (Mouse).